The sequence spans 785 residues: Endonuclease MutS2 (785 aa).

333 to 340 (GPNTGGKT) is a binding site for ATP. The Smr domain maps to 710–785 (LDLRGQRYDE…GNGATIVQLK (76 aa)).

The protein belongs to the DNA mismatch repair MutS family. MutS2 subfamily. Homodimer. Binds to stalled ribosomes, contacting rRNA.

Its function is as follows. Endonuclease that is involved in the suppression of homologous recombination and thus may have a key role in the control of bacterial genetic diversity. Functionally, acts as a ribosome collision sensor, splitting the ribosome into its 2 subunits. Detects stalled/collided 70S ribosomes which it binds and splits by an ATP-hydrolysis driven conformational change. Acts upstream of the ribosome quality control system (RQC), a ribosome-associated complex that mediates the extraction of incompletely synthesized nascent chains from stalled ribosomes and their subsequent degradation. Probably generates substrates for RQC. In Lactobacillus acidophilus (strain ATCC 700396 / NCK56 / N2 / NCFM), this protein is Endonuclease MutS2.